The chain runs to 486 residues: Glutamate--tRNA ligase (486 aa).

The 'HIGH' region motif lies at 11 to 21 (PSPTGLLHIGN). A 'KMSKS' region motif is present at residues 255-259 (KLSKR). Position 258 (K258) interacts with ATP.

It belongs to the class-I aminoacyl-tRNA synthetase family. Glutamate--tRNA ligase type 1 subfamily. Monomer.

It is found in the cytoplasm. The enzyme catalyses tRNA(Glu) + L-glutamate + ATP = L-glutamyl-tRNA(Glu) + AMP + diphosphate. Catalyzes the attachment of glutamate to tRNA(Glu) in a two-step reaction: glutamate is first activated by ATP to form Glu-AMP and then transferred to the acceptor end of tRNA(Glu). The sequence is that of Glutamate--tRNA ligase from Streptococcus pneumoniae (strain Hungary19A-6).